The primary structure comprises 260 residues: Proteasome assembly chaperone 2 (260 aa).

It belongs to the PSMG2 family. As to quaternary structure, forms a heterodimer with psmg1. Post-translationally, degraded by the proteasome upon completion of 20S proteasome maturation.

It is found in the nucleus. Its function is as follows. Chaperone protein which promotes assembly of the 20S proteasome as part of a heterodimer with psmg1. This chain is Proteasome assembly chaperone 2, found in Danio rerio (Zebrafish).